The chain runs to 233 residues: MAIHNRDKFLSNLAANLGRPRKTEGVERPEYSVQPQYEVLKGASQDELIDVLEKHCEVIHTDFVRTSKQELPHVVRQTIERYEAKSIIASNDKRNAEYGMDQAYNQFAEELDMHIWDASIGKENQVIAEKADVGISFSDITLAESGTVTLKNDKDNGRSISLMPKSYIAIIPKETLVPRMTQAAKQIHDDHMNGIQTPSSVCFVTGPSNSADIEMNLIVGVHGPVNVTYIVVD.

Belongs to the LutC/YkgG family.

Is involved in L-lactate degradation and allows cells to grow with lactate as the sole carbon source. This Oceanobacillus iheyensis (strain DSM 14371 / CIP 107618 / JCM 11309 / KCTC 3954 / HTE831) protein is Lactate utilization protein C.